The sequence spans 237 residues: Phosphoribosylaminoimidazole-succinocarboxamide synthase (237 aa).

It belongs to the SAICAR synthetase family.

The enzyme catalyses 5-amino-1-(5-phospho-D-ribosyl)imidazole-4-carboxylate + L-aspartate + ATP = (2S)-2-[5-amino-1-(5-phospho-beta-D-ribosyl)imidazole-4-carboxamido]succinate + ADP + phosphate + 2 H(+). Its pathway is purine metabolism; IMP biosynthesis via de novo pathway; 5-amino-1-(5-phospho-D-ribosyl)imidazole-4-carboxamide from 5-amino-1-(5-phospho-D-ribosyl)imidazole-4-carboxylate: step 1/2. The protein is Phosphoribosylaminoimidazole-succinocarboxamide synthase of Erwinia tasmaniensis (strain DSM 17950 / CFBP 7177 / CIP 109463 / NCPPB 4357 / Et1/99).